The sequence spans 158 residues: Small ribosomal subunit protein uS7 (158 aa).

The protein belongs to the universal ribosomal protein uS7 family. In terms of assembly, part of the 30S ribosomal subunit. Contacts proteins S9 and S11.

One of the primary rRNA binding proteins, it binds directly to 16S rRNA where it nucleates assembly of the head domain of the 30S subunit. Is located at the subunit interface close to the decoding center, probably blocks exit of the E-site tRNA. In Azobacteroides pseudotrichonymphae genomovar. CFP2, this protein is Small ribosomal subunit protein uS7.